The sequence spans 434 residues: Serine hydroxymethyltransferase (434 aa).

120–122 contacts (6S)-5,6,7,8-tetrahydrofolate; sequence GHI. At lysine 236 the chain carries N6-(pyridoxal phosphate)lysine. Position 255 (glutamate 255) interacts with (6S)-5,6,7,8-tetrahydrofolate.

This sequence belongs to the SHMT family. As to quaternary structure, homodimer. The cofactor is pyridoxal 5'-phosphate.

It localises to the cytoplasm. It participates in amino-acid biosynthesis; glycine biosynthesis; glycine from L-serine: step 1/1. Functionally, catalyzes the reversible interconversion of serine and glycine with a modified folate serving as the one-carbon carrier. Also exhibits a pteridine-independent aldolase activity toward beta-hydroxyamino acids, producing glycine and aldehydes, via a retro-aldol mechanism. The chain is Serine hydroxymethyltransferase from Korarchaeum cryptofilum (strain OPF8).